Here is a 640-residue protein sequence, read N- to C-terminus: 1-deoxy-D-xylulose-5-phosphate synthase (640 aa).

Residues His-79 and 120–122 (GHS) each bind thiamine diphosphate. Asp-151 contributes to the Mg(2+) binding site. Thiamine diphosphate contacts are provided by residues 152-153 (GS), Asn-180, Tyr-290, and Glu-372. Asn-180 serves as a coordination point for Mg(2+).

It belongs to the transketolase family. DXPS subfamily. Homodimer. Mg(2+) serves as cofactor. The cofactor is thiamine diphosphate.

The enzyme catalyses D-glyceraldehyde 3-phosphate + pyruvate + H(+) = 1-deoxy-D-xylulose 5-phosphate + CO2. Its pathway is metabolic intermediate biosynthesis; 1-deoxy-D-xylulose 5-phosphate biosynthesis; 1-deoxy-D-xylulose 5-phosphate from D-glyceraldehyde 3-phosphate and pyruvate: step 1/1. Its function is as follows. Catalyzes the acyloin condensation reaction between C atoms 2 and 3 of pyruvate and glyceraldehyde 3-phosphate to yield 1-deoxy-D-xylulose-5-phosphate (DXP). The sequence is that of 1-deoxy-D-xylulose-5-phosphate synthase from Rhodopseudomonas palustris (strain BisA53).